A 312-amino-acid chain; its full sequence is Ribosomal RNA small subunit methyltransferase H (312 aa).

Residues 35-37, aspartate 55, phenylalanine 79, aspartate 101, and glutamine 108 each bind S-adenosyl-L-methionine; that span reads GGH.

Belongs to the methyltransferase superfamily. RsmH family.

It localises to the cytoplasm. The enzyme catalyses cytidine(1402) in 16S rRNA + S-adenosyl-L-methionine = N(4)-methylcytidine(1402) in 16S rRNA + S-adenosyl-L-homocysteine + H(+). Specifically methylates the N4 position of cytidine in position 1402 (C1402) of 16S rRNA. The sequence is that of Ribosomal RNA small subunit methyltransferase H from Buchnera aphidicola subsp. Acyrthosiphon pisum (strain APS) (Acyrthosiphon pisum symbiotic bacterium).